A 337-amino-acid chain; its full sequence is Phosphate acyltransferase (337 aa).

It belongs to the PlsX family. As to quaternary structure, homodimer. Probably interacts with PlsY.

The protein localises to the cytoplasm. The enzyme catalyses a fatty acyl-[ACP] + phosphate = an acyl phosphate + holo-[ACP]. Its pathway is lipid metabolism; phospholipid metabolism. Catalyzes the reversible formation of acyl-phosphate (acyl-PO(4)) from acyl-[acyl-carrier-protein] (acyl-ACP). This enzyme utilizes acyl-ACP as fatty acyl donor, but not acyl-CoA. This Moritella marina (Vibrio marinus) protein is Phosphate acyltransferase.